Reading from the N-terminus, the 540-residue chain is Glucose-6-phosphate isomerase (540 aa).

The Proton donor role is filled by E346. Active-site residues include H377 and K505.

The protein belongs to the GPI family.

The protein localises to the cytoplasm. It catalyses the reaction alpha-D-glucose 6-phosphate = beta-D-fructose 6-phosphate. It participates in carbohydrate biosynthesis; gluconeogenesis. Its pathway is carbohydrate degradation; glycolysis; D-glyceraldehyde 3-phosphate and glycerone phosphate from D-glucose: step 2/4. Functionally, catalyzes the reversible isomerization of glucose-6-phosphate to fructose-6-phosphate. The sequence is that of Glucose-6-phosphate isomerase from Francisella tularensis subsp. tularensis (strain SCHU S4 / Schu 4).